The primary structure comprises 602 residues: Elongation factor 4 (602 aa).

The tr-type G domain maps to 6–188; it reads DHIRNFSIVA…AIVNKLPAPK (183 aa). GTP-binding positions include 18 to 23 and 135 to 138; these read DHGKST and NKID.

The protein belongs to the TRAFAC class translation factor GTPase superfamily. Classic translation factor GTPase family. LepA subfamily.

Its subcellular location is the cell inner membrane. It carries out the reaction GTP + H2O = GDP + phosphate + H(+). Its function is as follows. Required for accurate and efficient protein synthesis under certain stress conditions. May act as a fidelity factor of the translation reaction, by catalyzing a one-codon backward translocation of tRNAs on improperly translocated ribosomes. Back-translocation proceeds from a post-translocation (POST) complex to a pre-translocation (PRE) complex, thus giving elongation factor G a second chance to translocate the tRNAs correctly. Binds to ribosomes in a GTP-dependent manner. The chain is Elongation factor 4 from Brucella abortus (strain 2308).